Reading from the N-terminus, the 231-residue chain is Homeobox protein engrailed-1a (231 aa).

Disordered regions lie at residues Met-1 to Asn-29, Gly-43 to Gln-105, and Asp-121 to Thr-148. Positions Gly-43–Gly-56 are enriched in basic and acidic residues. Over residues Asp-68–Lys-102 the composition is skewed to low complexity. Residues Asp-143–Ser-202 constitute a DNA-binding region (homeobox).

The protein belongs to the engrailed homeobox family.

It is found in the nucleus. The protein is Homeobox protein engrailed-1a (eng1a) of Danio rerio (Zebrafish).